A 2346-amino-acid chain; its full sequence is Acetyl-CoA carboxylase 1 (2346 aa).

The residue at position 1 (M1) is an N-acetylmethionine. Phosphoserine is present on residues S5, S23, S25, S29, S34, S48, S50, and S53. T58 is subject to Phosphothreonine. The residue at position 78 (S78) is a Phosphoserine. Phosphoserine; by AMPK is present on S80. Residues 117–618 enclose the Biotin carboxylation domain; that stretch reads VIEKVLIANN…DTGWLDRLIA (502 aa). One can recognise an ATP-grasp domain in the interval 275–466; the sequence is SKRILNVPQE…LPAAQLQIAM (192 aa). 315-320 serves as a coordination point for ATP; sequence GGGGKG. 3 residues coordinate Mg(2+): E424, E437, and N439. Residues E424, E437, and N439 each coordinate Mn(2+). R441 is an active-site residue. T610 bears the Phosphothreonine mark. Positions 745–819 constitute a Biotinyl-binding domain; that stretch reads FEKENDPSVL…DPGCVIAKMQ (75 aa). K786 is subject to N6-biotinyllysine. Residues S835, S1201, S1216, and S1218 each carry the phosphoserine modification. The residue at position 1227 (T1227) is a Phosphothreonine. 3 positions are modified to phosphoserine: S1259, S1263, and S1273. N6-acetyllysine is present on K1334. The 339-residue stretch at 1576-1914 folds into the CoA carboxyltransferase N-terminal domain; that stretch reads PYVTKDLLQS…SVYSSVPLLN (339 aa). The tract at residues 1576 to 2234 is carboxyltransferase; it reads PYVTKDLLQS…EDLVKKKIHN (659 aa). 3 residues coordinate CoA: R1823, K2127, and R2129. The region spanning 1918–2234 is the CoA carboxyltransferase C-terminal domain; sequence PIDRVIEFVP…EDLVKKKIHN (317 aa). Residue T2153 is modified to Phosphothreonine.

As to quaternary structure, monomer, homodimer, and homotetramer. Can form filamentous polymers. Interacts in its inactive phosphorylated form with the BRCT domains of BRCA1 which prevents ACACA dephosphorylation and inhibits lipid synthesis. Interacts with MID1IP1; interaction with MID1IP1 promotes oligomerization and increases its activity. It depends on Mg(2+) as a cofactor. Mn(2+) serves as cofactor. The cofactor is biotin. Post-translationally, phosphorylation on Ser-1263 is required for interaction with BRCA1. In terms of processing, phosphorylation at Ser-80 by AMPK inactivates enzyme activity. The biotin cofactor is covalently attached to the central biotinyl-binding domain and is required for the catalytic activity. As to expression, expressed at high levels in mammary gland.

It is found in the cytoplasm. Its subcellular location is the cytosol. The enzyme catalyses hydrogencarbonate + acetyl-CoA + ATP = malonyl-CoA + ADP + phosphate + H(+). It functions in the pathway lipid metabolism; malonyl-CoA biosynthesis; malonyl-CoA from acetyl-CoA: step 1/1. Its activity is regulated as follows. Inhibited by phosphorylation. Citrate promotes oligomerization of the protein into filaments that correspond to the most active form of the carboxylase. Its function is as follows. Cytosolic enzyme that catalyzes the carboxylation of acetyl-CoA to malonyl-CoA, the first and rate-limiting step of de novo fatty acid biosynthesis. This is a 2 steps reaction starting with the ATP-dependent carboxylation of the biotin carried by the biotin carboxyl carrier (BCC) domain followed by the transfer of the carboxyl group from carboxylated biotin to acetyl-CoA. The chain is Acetyl-CoA carboxylase 1 from Ovis aries (Sheep).